We begin with the raw amino-acid sequence, 168 residues long: Peptide deformylase (168 aa).

Residues C91 and H133 each contribute to the Fe cation site. The active site involves E134. H137 is a binding site for Fe cation.

The protein belongs to the polypeptide deformylase family. Fe(2+) serves as cofactor.

It carries out the reaction N-terminal N-formyl-L-methionyl-[peptide] + H2O = N-terminal L-methionyl-[peptide] + formate. Functionally, removes the formyl group from the N-terminal Met of newly synthesized proteins. Requires at least a dipeptide for an efficient rate of reaction. N-terminal L-methionine is a prerequisite for activity but the enzyme has broad specificity at other positions. The sequence is that of Peptide deformylase from Endomicrobium trichonymphae.